We begin with the raw amino-acid sequence, 403 residues long: Phosphoglycerate kinase (403 aa).

Substrate is bound by residues 24–26 (DLN), arginine 39, 62–65 (HLGR), arginine 121, and arginine 161. ATP contacts are provided by residues lysine 211, glycine 299, glutamate 330, and 359 to 362 (GGDS).

The protein belongs to the phosphoglycerate kinase family. In terms of assembly, monomer.

It localises to the cytoplasm. It catalyses the reaction (2R)-3-phosphoglycerate + ATP = (2R)-3-phospho-glyceroyl phosphate + ADP. It participates in carbohydrate degradation; glycolysis; pyruvate from D-glyceraldehyde 3-phosphate: step 2/5. The chain is Phosphoglycerate kinase from Corynebacterium kroppenstedtii (strain DSM 44385 / JCM 11950 / CIP 105744 / CCUG 35717).